A 184-amino-acid polypeptide reads, in one-letter code: UPF0398 protein OB1025 (184 aa).

The protein belongs to the UPF0398 family.

In Oceanobacillus iheyensis (strain DSM 14371 / CIP 107618 / JCM 11309 / KCTC 3954 / HTE831), this protein is UPF0398 protein OB1025.